Consider the following 506-residue polypeptide: MGKGTVVGTAVVVCAAAAAAVGVAVVVSRRRRSKREAEEERRRRAAAVIEEVEQRFSTPTALLRGIADAMVEEMERGLRADPHAPLKMLISYVDNLPTGDEHGLFYALDLGGTNFRVIRVQLGGREKRVVSQQYEEVAIPPHLMVGTSMELFDFIAAELESFVKTEGEDFHLPEGRQRELGFTFSFPVHQTSISSGTLIKWTKGFSINGTVGEDVVAELSRAMERQGLDMKVTALVNDTVGTLAGGRYVDNDVAAAVILGTGTNAAYVEHANAIPKWTGLLPRSGNMVINMEWGNFKSERLPRSDYDNALDFESLNPGEQIYEKMISGMYLGEIVRRILLKLAHDASLFGDVVPTKLEQRFILRTPDMSAMHHDTSHDLKHLGAKLKDILGVADTSLEARYITLHVCDLVAERGARLAAAGIYGILKKLGRDRVPSDGSQKQRTVIALDGGLYEHYKKFRTCLEATLADLLGEEAASSVVVKLANDGSGIGAALLAASHSQYASVE.

Residues 6-26 traverse the membrane as a helical segment; it reads VVGTAVVVCAAAAAAVGVAVV. The Hexokinase domain maps to 43–497; it reads RRAAAVIEEV…SGIGAALLAA (455 aa). The segment at 98 to 236 is hexokinase small subdomain; that stretch reads TGDEHGLFYA…GLDMKVTALV (139 aa). ADP contacts are provided by Gly112, Thr113, and Asn114. D-glucose contacts are provided by Thr202, Lys203, Asn237, and Asp238. The tract at residues 237–486 is hexokinase large subdomain; it reads NDTVGTLAGG…SSVVVKLAND (250 aa). Position 261 (Thr261) interacts with ADP. D-glucose contacts are provided by Asn264, Glu292, and Glu323. Position 451 (Gly451) interacts with ADP.

Belongs to the hexokinase family. In terms of tissue distribution, expressed in roots, leaves, flowers, immature seeds and endosperm.

Its subcellular location is the plastid. The protein localises to the chloroplast outer membrane. It catalyses the reaction a D-hexose + ATP = a D-hexose 6-phosphate + ADP + H(+). The catalysed reaction is D-fructose + ATP = D-fructose 6-phosphate + ADP + H(+). It carries out the reaction D-glucose + ATP = D-glucose 6-phosphate + ADP + H(+). The protein operates within carbohydrate metabolism; hexose metabolism. Its pathway is carbohydrate degradation; glycolysis; D-glyceraldehyde 3-phosphate and glycerone phosphate from D-glucose: step 1/4. In terms of biological role, fructose and glucose phosphorylating enzyme. Functions as a glucose sensor for plant growth and photosynthesis. This chain is Hexokinase-6 (HXK6), found in Oryza sativa subsp. japonica (Rice).